Reading from the N-terminus, the 46-residue chain is Endochitinase 4 (46 aa).

It belongs to the glycosyl hydrolase 19 family. Chitinase class I subfamily.

The catalysed reaction is Random endo-hydrolysis of N-acetyl-beta-D-glucosaminide (1-&gt;4)-beta-linkages in chitin and chitodextrins.. Its function is as follows. Defense against chitin-containing fungal and bacterial pathogens. The protein is Endochitinase 4 of Arachis hypogaea (Peanut).